Here is a 572-residue protein sequence, read N- to C-terminus: Phosphoglucomutase-1 (572 aa).

Substrate-binding positions include T23, R27, 126–127 (SH), and K140. S126 (phosphoserine intermediate) is an active-site residue. S126 is a binding site for Mg(2+). Residues D308, D310, and D312 each coordinate Mg(2+). Substrate is bound by residues 312-313 (DR), T373, 392-394 (EES), K405, and R527.

Belongs to the phosphohexose mutase family. Mg(2+) is required as a cofactor. In terms of processing, phosphorylated via a calcium-dependent protein kinase. Very rapidly (within 80 ms) dephosphorylated during triggered trichocyst exocytosis. O-glycosylated with a short chain of mannose residues.

It is found in the cytoplasm. The enzyme catalyses alpha-D-glucose 1-phosphate = alpha-D-glucose 6-phosphate. In terms of biological role, may be involved in membrane fusion in exocytosis. This Paramecium tetraurelia protein is Phosphoglucomutase-1 (pp63-1).